The primary structure comprises 319 residues: Acetyl-coenzyme A carboxylase carboxyl transferase subunit alpha (319 aa).

The 262-residue stretch at 35–296 (DLDKELEQLE…KATLLRQLAD (262 aa)) folds into the CoA carboxyltransferase C-terminal domain.

Belongs to the AccA family. Acetyl-CoA carboxylase is a heterohexamer composed of biotin carboxyl carrier protein (AccB), biotin carboxylase (AccC) and two subunits each of ACCase subunit alpha (AccA) and ACCase subunit beta (AccD).

Its subcellular location is the cytoplasm. The enzyme catalyses N(6)-carboxybiotinyl-L-lysyl-[protein] + acetyl-CoA = N(6)-biotinyl-L-lysyl-[protein] + malonyl-CoA. It participates in lipid metabolism; malonyl-CoA biosynthesis; malonyl-CoA from acetyl-CoA: step 1/1. Functionally, component of the acetyl coenzyme A carboxylase (ACC) complex. First, biotin carboxylase catalyzes the carboxylation of biotin on its carrier protein (BCCP) and then the CO(2) group is transferred by the carboxyltransferase to acetyl-CoA to form malonyl-CoA. This chain is Acetyl-coenzyme A carboxylase carboxyl transferase subunit alpha, found in Vibrio cholerae serotype O1 (strain ATCC 39541 / Classical Ogawa 395 / O395).